A 492-amino-acid polypeptide reads, in one-letter code: Catalase-2 (492 aa).

Catalysis depends on residues His65 and Asn138. Position 348 (Tyr348) interacts with heme.

It belongs to the catalase family. As to quaternary structure, homotetramer and heterotetramer. At least six or seven isozymes are produced from a mixture of 3 gene products. Interacts with NCA1. Interacts with LSD1. Heme serves as cofactor.

The protein resides in the cytoplasm. It is found in the cytosol. It localises to the peroxisome matrix. It carries out the reaction 2 H2O2 = O2 + 2 H2O. Catalyzes the degradation of hydrogen peroxide (H(2)O(2)) generated by peroxisomal oxidases to water and oxygen, thereby protecting cells from the toxic effects of hydrogen peroxide. In Arabidopsis thaliana (Mouse-ear cress), this protein is Catalase-2 (CAT2).